We begin with the raw amino-acid sequence, 588 residues long: Endogenous retrovirus group K member 7 Env polyprotein (588 aa).

A fusion peptide region spans residues Phe-355–Val-375. Residues Ile-522 to Leu-542 traverse the membrane as a helical segment.

Belongs to the beta type-B retroviral envelope protein family. HERV class-II K(HML-2) env subfamily. In terms of assembly, the surface (SU) and transmembrane (TM) proteins form a heterodimer. SU and TM are attached by noncovalent interactions or by a labile interchain disulfide bond. In terms of processing, specific enzymatic cleavages in vivo yield the mature SU and TM proteins. As to expression, expressed in lung, placenta, testis and peripheral blood lymphocytes.

The protein resides in the virion. It is found in the cell membrane. Its function is as follows. Retroviral envelope proteins mediate receptor recognition and membrane fusion during early infection. Endogenous envelope proteins may have kept, lost or modified their original function during evolution. In terms of biological role, SU mediates receptor recognition. TM anchors the envelope heterodimer to the viral membrane through one transmembrane domain. The other hydrophobic domain, called fusion peptide, mediates fusion of the viral membrane with the target cell membrane. The sequence is that of Endogenous retrovirus group K member 7 Env polyprotein (ERVK-7) from Homo sapiens (Human).